The primary structure comprises 787 residues: Lon protease (787 aa).

The region spanning 12–210 (LPLIPLRGLA…LIYSILLEEI (199 aa)) is the Lon N-terminal domain. 362–369 (GPPGTGKT) serves as a coordination point for ATP. Residues 599-780 (NPQIGLVNGL…DEVLEQALLK (182 aa)) enclose the Lon proteolytic domain. Residues S686 and K729 contribute to the active site.

This sequence belongs to the peptidase S16 family. In terms of assembly, homohexamer. Organized in a ring with a central cavity.

The protein resides in the cytoplasm. The enzyme catalyses Hydrolysis of proteins in presence of ATP.. Functionally, ATP-dependent serine protease that mediates the selective degradation of mutant and abnormal proteins as well as certain short-lived regulatory proteins. Required for cellular homeostasis and for survival from DNA damage and developmental changes induced by stress. Degrades polypeptides processively to yield small peptide fragments that are 5 to 10 amino acids long. Binds to DNA in a double-stranded, site-specific manner. The sequence is that of Lon protease from Clostridioides difficile (strain 630) (Peptoclostridium difficile).